The sequence spans 159 residues: Sec-independent protein translocase protein TatB (159 aa).

The chain crosses the membrane as a helical span at residues 1–21 (MIDIGLSKMALIGAVALIVIG).

The protein belongs to the TatB family. As to quaternary structure, the Tat system comprises two distinct complexes: a TatABC complex, containing multiple copies of TatA, TatB and TatC subunits, and a separate TatA complex, containing only TatA subunits. Substrates initially bind to the TatABC complex, which probably triggers association of the separate TatA complex to form the active translocon.

It localises to the cell inner membrane. Part of the twin-arginine translocation (Tat) system that transports large folded proteins containing a characteristic twin-arginine motif in their signal peptide across membranes. Together with TatC, TatB is part of a receptor directly interacting with Tat signal peptides. TatB may form an oligomeric binding site that transiently accommodates folded Tat precursor proteins before their translocation. This is Sec-independent protein translocase protein TatB from Acidovorax sp. (strain JS42).